Reading from the N-terminus, the 579-residue chain is Protein inscuteable homolog (579 aa).

An important for interaction with GPSM2 region spans residues 74–89 (SVQRWMEDLKLMTECE). The PDZ-binding motif lies at 576 to 579 (ESFV).

In terms of assembly, interacts with ALS2CR19/PAR3B and GPSM1/AGS3. Interacts with F2RL2/PAR3. Interacts with GPSM2/LGN (via TPR repeat region). As to expression, expressed in brain, kidney, liver, testis and skin.

It is found in the cytoplasm. The protein localises to the cell cortex. Functionally, may function as an adapter linking the Par3 complex to the GPSM1/GPSM2 complex. Involved in spindle orientation during mitosis. May regulate cell proliferation and differentiation in the developing nervous system. May play a role in the asymmetric division of fibroblasts and participate in the process of stratification of the squamous epithelium. The protein is Protein inscuteable homolog (Insc) of Mus musculus (Mouse).